We begin with the raw amino-acid sequence, 260 residues long: Ribonuclease PH (260 aa).

Residues Arg88 and 126–128 (GTR) each bind phosphate.

This sequence belongs to the RNase PH family. As to quaternary structure, homohexameric ring arranged as a trimer of dimers.

The enzyme catalyses tRNA(n+1) + phosphate = tRNA(n) + a ribonucleoside 5'-diphosphate. Phosphorolytic 3'-5' exoribonuclease that plays an important role in tRNA 3'-end maturation. Removes nucleotide residues following the 3'-CCA terminus of tRNAs; can also add nucleotides to the ends of RNA molecules by using nucleoside diphosphates as substrates, but this may not be physiologically important. Probably plays a role in initiation of 16S rRNA degradation (leading to ribosome degradation) during starvation. This Mycobacterium sp. (strain JLS) protein is Ribonuclease PH.